The chain runs to 180 residues: ATP-dependent protease subunit HslV (180 aa).

The active site involves threonine 5. Glycine 161, cysteine 164, and threonine 167 together coordinate Na(+).

The protein belongs to the peptidase T1B family. HslV subfamily. In terms of assembly, a double ring-shaped homohexamer of HslV is capped on each side by a ring-shaped HslU homohexamer. The assembly of the HslU/HslV complex is dependent on binding of ATP.

It localises to the cytoplasm. The catalysed reaction is ATP-dependent cleavage of peptide bonds with broad specificity.. Allosterically activated by HslU binding. In terms of biological role, protease subunit of a proteasome-like degradation complex believed to be a general protein degrading machinery. The protein is ATP-dependent protease subunit HslV of Campylobacter fetus subsp. fetus (strain 82-40).